A 190-amino-acid polypeptide reads, in one-letter code: Glutathione peroxidase 2 (190 aa).

Sec40 is an active-site residue. A non-standard amino acid (selenocysteine) is located at residue Sec40.

It belongs to the glutathione peroxidase family. Homotetramer. Mostly in liver and gastrointestinal tract, not found in heart or kidney.

The protein resides in the cytoplasm. It localises to the cytosol. The catalysed reaction is 2 glutathione + H2O2 = glutathione disulfide + 2 H2O. The enzyme catalyses a hydroperoxy polyunsaturated fatty acid + 2 glutathione = a hydroxy polyunsaturated fatty acid + glutathione disulfide + H2O. It catalyses the reaction tert-butyl hydroperoxide + 2 glutathione = tert-butanol + glutathione disulfide + H2O. It carries out the reaction cumene hydroperoxide + 2 glutathione = 2-phenylpropan-2-ol + glutathione disulfide + H2O. The catalysed reaction is (13S)-hydroperoxy-(9Z,11E)-octadecadienoate + 2 glutathione = (13S)-hydroxy-(9Z,11E)-octadecadienoate + glutathione disulfide + H2O. The enzyme catalyses (5S)-hydroperoxy-(6E,8Z,11Z,14Z)-eicosatetraenoate + 2 glutathione = (5S)-hydroxy-(6E,8Z,11Z,14Z)-eicosatetraenoate + glutathione disulfide + H2O. It catalyses the reaction (12R)-hydroperoxy-(5Z,8Z,10E,14Z)-eicosatetraenoate + 2 glutathione = (12R)-hydroxy-(5Z,8Z,10E,14Z)-eicosatetraenoate + glutathione disulfide + H2O. It carries out the reaction (15S)-hydroperoxy-(5Z,8Z,11Z,13E)-eicosatetraenoate + 2 glutathione = (15S)-hydroxy-(5Z,8Z,11Z,13E)-eicosatetraenoate + glutathione disulfide + H2O. Functionally, catalyzes the reduction of hydroperoxides in a glutathione-dependent manner thus regulating cellular redox homeostasis. Can reduce small soluble hydroperoxides such as H2O2, cumene hydroperoxide and tert-butyl hydroperoxide, as well as several fatty acid-derived hydroperoxides. Cannot reduce phosphatidycholine hydroperoxide. The polypeptide is Glutathione peroxidase 2 (Homo sapiens (Human)).